The chain runs to 208 residues: Thymidylate kinase (208 aa).

Position 10–17 (10–17 (GIDGCGKT)) interacts with ATP.

Belongs to the thymidylate kinase family.

It catalyses the reaction dTMP + ATP = dTDP + ADP. Functionally, phosphorylation of dTMP to form dTDP in both de novo and salvage pathways of dTTP synthesis. The polypeptide is Thymidylate kinase (Caldanaerobacter subterraneus subsp. tengcongensis (strain DSM 15242 / JCM 11007 / NBRC 100824 / MB4) (Thermoanaerobacter tengcongensis)).